The chain runs to 129 residues: Serum amyloid A-1 protein (129 aa).

The signal sequence occupies residues 1–18 (MKLFTGLIFCSLVLGVSS). The segment at 19–44 (QWYSFIGEAAQGAWDMYRAYSDMIEA) is important for amyloid formation. Residues 92-129 (GDSGHGVEDSKADQAANEWGRSGKDPNHFRPPGLPDKY) form a disordered region.

This sequence belongs to the SAA family. Homohexamer; dimer of trimers. Can form amyloid fibrils after partial proteolysis; the native, undenatured protein does not form amyloid fibrils (in vitro). Apolipoprotein of the HDL complex. Binds to heparin. In terms of tissue distribution, detected in liver.

It is found in the secreted. Major acute phase protein. This is Serum amyloid A-1 protein (SAA1) from Neovison vison (American mink).